A 273-amino-acid polypeptide reads, in one-letter code: Ribonuclease PH (273 aa).

Residues Arg86 and 124 to 126 (GTR) each bind phosphate. The tract at residues 254-273 (GHQEPGEGAGVSLAPGGGGL) is disordered.

It belongs to the RNase PH family. As to quaternary structure, homohexameric ring arranged as a trimer of dimers.

The catalysed reaction is tRNA(n+1) + phosphate = tRNA(n) + a ribonucleoside 5'-diphosphate. Functionally, phosphorolytic 3'-5' exoribonuclease that plays an important role in tRNA 3'-end maturation. Removes nucleotide residues following the 3'-CCA terminus of tRNAs; can also add nucleotides to the ends of RNA molecules by using nucleoside diphosphates as substrates, but this may not be physiologically important. Probably plays a role in initiation of 16S rRNA degradation (leading to ribosome degradation) during starvation. This chain is Ribonuclease PH, found in Symbiobacterium thermophilum (strain DSM 24528 / JCM 14929 / IAM 14863 / T).